The following is a 498-amino-acid chain: Phenylalanine--tRNA ligase alpha subunit (498 aa).

L-phenylalanine is bound by residues Thr-328, 372 to 374, and Tyr-412; that span reads QVE. A Mg(2+)-binding site is contributed by Glu-414. An L-phenylalanine-binding site is contributed by Phe-438.

The protein belongs to the class-II aminoacyl-tRNA synthetase family. Phe-tRNA synthetase alpha subunit type 2 subfamily. As to quaternary structure, tetramer of two alpha and two beta subunits. The cofactor is Mg(2+).

The protein resides in the cytoplasm. It carries out the reaction tRNA(Phe) + L-phenylalanine + ATP = L-phenylalanyl-tRNA(Phe) + AMP + diphosphate + H(+). This Drosophila melanogaster (Fruit fly) protein is Phenylalanine--tRNA ligase alpha subunit.